Consider the following 126-residue polypeptide: Probable 4-amino-4-deoxy-L-arabinose-phosphoundecaprenol flippase subunit ArnF (126 aa).

The Cytoplasmic portion of the chain corresponds to M1 to Y4. Residues I5–V25 form a helical membrane-spanning segment. The Periplasmic segment spans residues V26–S49. A helical transmembrane segment spans residues L50–T70. At L71–A79 the chain is on the cytoplasmic side. A helical transmembrane segment spans residues Y80 to F100. The Periplasmic portion of the chain corresponds to N101–E102. A helical transmembrane segment spans residues T103 to S123. Residues R124–E126 are Cytoplasmic-facing.

It belongs to the ArnF family. In terms of assembly, heterodimer of ArnE and ArnF.

It is found in the cell inner membrane. The protein operates within bacterial outer membrane biogenesis; lipopolysaccharide biosynthesis. Its function is as follows. Translocates 4-amino-4-deoxy-L-arabinose-phosphoundecaprenol (alpha-L-Ara4N-phosphoundecaprenol) from the cytoplasmic to the periplasmic side of the inner membrane. The protein is Probable 4-amino-4-deoxy-L-arabinose-phosphoundecaprenol flippase subunit ArnF of Photorhabdus laumondii subsp. laumondii (strain DSM 15139 / CIP 105565 / TT01) (Photorhabdus luminescens subsp. laumondii).